Consider the following 442-residue polypeptide: 5-methylthioadenosine/S-adenosylhomocysteine deaminase (442 aa).

2 residues coordinate Zn(2+): H70 and H72. Residues E99 and H191 each contribute to the substrate site. H218 contributes to the Zn(2+) binding site. 2 residues coordinate substrate: E221 and D306. D306 is a binding site for Zn(2+).

Belongs to the metallo-dependent hydrolases superfamily. MTA/SAH deaminase family. Requires Zn(2+) as cofactor.

It catalyses the reaction S-adenosyl-L-homocysteine + H2O + H(+) = S-inosyl-L-homocysteine + NH4(+). The catalysed reaction is S-methyl-5'-thioadenosine + H2O + H(+) = S-methyl-5'-thioinosine + NH4(+). In terms of biological role, catalyzes the deamination of 5-methylthioadenosine and S-adenosyl-L-homocysteine into 5-methylthioinosine and S-inosyl-L-homocysteine, respectively. Is also able to deaminate adenosine. The chain is 5-methylthioadenosine/S-adenosylhomocysteine deaminase from Nitratidesulfovibrio vulgaris (strain DP4) (Desulfovibrio vulgaris).